The primary structure comprises 273 residues: Nitrogenase iron protein (273 aa).

ATP is bound at residue 8-15; the sequence is GKGGIGKS. Cysteine 95 serves as a coordination point for [4Fe-4S] cluster. An ADP-ribosylarginine; by dinitrogenase reductase ADP-ribosyltransferase modification is found at arginine 98. Residue cysteine 130 participates in [4Fe-4S] cluster binding.

The protein belongs to the NifH/BchL/ChlL family. As to quaternary structure, homodimer. Requires [4Fe-4S] cluster as cofactor. Post-translationally, the reversible ADP-ribosylation of Arg-98 inactivates the nitrogenase reductase and regulates nitrogenase activity.

It catalyses the reaction N2 + 8 reduced [2Fe-2S]-[ferredoxin] + 16 ATP + 16 H2O = H2 + 8 oxidized [2Fe-2S]-[ferredoxin] + 2 NH4(+) + 16 ADP + 16 phosphate + 6 H(+). The key enzymatic reactions in nitrogen fixation are catalyzed by the nitrogenase complex, which has 2 components: the iron protein and the molybdenum-iron protein. The sequence is that of Nitrogenase iron protein from Roseiflexus sp. (strain RS-1).